A 154-amino-acid chain; its full sequence is Aspartate carbamoyltransferase regulatory chain (154 aa).

Residues C109, C114, C138, and C141 each coordinate Zn(2+).

Belongs to the PyrI family. As to quaternary structure, contains catalytic and regulatory chains. It depends on Zn(2+) as a cofactor.

In terms of biological role, involved in allosteric regulation of aspartate carbamoyltransferase. The polypeptide is Aspartate carbamoyltransferase regulatory chain (Photobacterium profundum (strain SS9)).